A 451-amino-acid chain; its full sequence is Glycylpeptide N-tetradecanoyltransferase (451 aa).

Residues 34-37 (YKFW), 167-169 (LCV), and 175-179 (SKRLT) contribute to the tetradecanoyl-CoA site. The active-site Proton acceptor; via carboxylate is L451.

Belongs to the NMT family. Monomer.

The protein resides in the cytoplasm. The enzyme catalyses N-terminal glycyl-[protein] + tetradecanoyl-CoA = N-tetradecanoylglycyl-[protein] + CoA + H(+). In terms of biological role, adds a myristoyl group to the N-terminal glycine residue of certain cellular proteins. The protein is Glycylpeptide N-tetradecanoyltransferase (NMT1) of Candida glabrata (strain ATCC 2001 / BCRC 20586 / JCM 3761 / NBRC 0622 / NRRL Y-65 / CBS 138) (Yeast).